Here is a 138-residue protein sequence, read N- to C-terminus: Unique cartilage matrix-associated protein (138 aa).

The N-terminal stretch at M1–S26 is a signal peptide. A propeptide spans A28 to R64 (ucma-N). The disordered stretch occupies residues F58–I116. The span at K67–E102 shows a compositional bias: basic and acidic residues. A coiled-coil region spans residues Q69–Q118. 4-carboxyglutamate is present on residues E71, E75, E84, E88, E91, E92, E96, E98, E102, E103, E107, E110, E114, and E117.

It belongs to the UCMA family. Post-translationally, proteolytically cleaved by a furin-like convertase to generate a persistent C-terminal fragment found in almost the entire cartilage matrix, and affecting osteoblast differentiation. Sulfated on tyrosine residues.

It is found in the secreted. It localises to the extracellular space. The protein localises to the extracellular matrix. May be involved in the negative control of osteogenic differentiation of osteochondrogenic precursor cells in peripheral zones of fetal cartilage and at the cartilage-bone interface. The chain is Unique cartilage matrix-associated protein (ucma) from Xenopus tropicalis (Western clawed frog).